Reading from the N-terminus, the 146-residue chain is 3-hydroxyacyl-[acyl-carrier-protein] dehydratase FabZ (146 aa).

H48 is an active-site residue.

It belongs to the thioester dehydratase family. FabZ subfamily.

It is found in the cytoplasm. The enzyme catalyses a (3R)-hydroxyacyl-[ACP] = a (2E)-enoyl-[ACP] + H2O. Involved in unsaturated fatty acids biosynthesis. Catalyzes the dehydration of short chain beta-hydroxyacyl-ACPs and long chain saturated and unsaturated beta-hydroxyacyl-ACPs. The chain is 3-hydroxyacyl-[acyl-carrier-protein] dehydratase FabZ from Campylobacter jejuni subsp. jejuni serotype O:6 (strain 81116 / NCTC 11828).